Consider the following 534-residue polypeptide: DNA-directed RNA polymerase III subunit RPC3 (534 aa).

The disordered stretch occupies residues 161–181 (PSVPTTENSDPGPPPPAPTLV). S194 is subject to Phosphoserine. The interval 197 to 228 (GKGKRRRSSDEDAAGEPKAKRPKYTTDNKEPI) is disordered. Positions 211–228 (GEPKAKRPKYTTDNKEPI) are enriched in basic and acidic residues.

Belongs to the eukaryotic RPC3/POLR3C RNA polymerase subunit family. Component of the RNA polymerase III complex consisting of 17 subunits: a ten-subunit horseshoe-shaped catalytic core composed of POLR3A/RPC1, POLR3B/RPC2, POLR1C/RPAC1, POLR1D/RPAC2, POLR3K/RPC10, POLR2E/RPABC1, POLR2F/RPABC2, POLR2H/RPABC3, POLR2K/RPABC4 and POLR2L/RPABC5; a mobile stalk composed of two subunits POLR3H/RPC8 and CRCP/RPC9, protruding from the core and functioning primarily in transcription initiation; and additional subunits homologous to general transcription factors of the RNA polymerase II machinery, POLR3C/RPC3-POLR3F/RPC6-POLR3G/RPC7 heterotrimer required for transcription initiation and POLR3D/RPC4-POLR3E/RPC5 heterodimer involved in both transcription initiation and termination. Directly interacts with POLR3G/RPC7 and POLR3GL. Directly interacts with POLR3F/RPC6. Interacts with GTF3C4. As part of the RNA polymerase III complex, interacts with PKP2.

It is found in the nucleus. Its function is as follows. DNA-dependent RNA polymerase catalyzes the transcription of DNA into RNA using the four ribonucleoside triphosphates as substrates. Specific peripheric component of RNA polymerase III (Pol III) which synthesizes small non-coding RNAs including 5S rRNA, snRNAs, tRNAs and miRNAs from at least 500 distinct genomic loci. Part of POLR3C/RPC3-POLR3F/RPC6-POLR3G/RPC7 heterotrimer, coordinates the dynamics of Pol III stalk and clamp modules during the transition from apo to elongation state. Pol III plays a key role in sensing and limiting infection by intracellular bacteria and DNA viruses. Acts as a nuclear and cytosolic DNA sensor involved in innate immune response. Can sense non-self dsDNA that serves as template for transcription into dsRNA. The non-self RNA polymerase III transcripts, such as Epstein-Barr virus-encoded RNAs (EBERs) induce type I interferon and NF-kappa-B through the RIG-I pathway. Preferentially binds single-stranded DNA (ssDNA) in a sequence-independent manner. This chain is DNA-directed RNA polymerase III subunit RPC3, found in Homo sapiens (Human).